Consider the following 244-residue polypeptide: 3-oxoacyl-[acyl-carrier-protein] reductase FabG (244 aa).

NADP(+)-binding positions include 12–15 and Thr-37; that span reads GASR. Ca(2+) is bound by residues Gly-50 and Gly-53. NADP(+) is bound by residues 59 to 60 and Asn-86; that span reads NV. Ser-138 lines the substrate pocket. Asn-145 lines the Ca(2+) pocket. The active-site Proton acceptor is Tyr-151. NADP(+) is bound by residues 151–155 and Ile-184; that span reads YAAAK. The Ca(2+) site is built by Glu-233 and Thr-234.

It belongs to the short-chain dehydrogenases/reductases (SDR) family. Homotetramer.

The catalysed reaction is a (3R)-hydroxyacyl-[ACP] + NADP(+) = a 3-oxoacyl-[ACP] + NADPH + H(+). The enzyme catalyses 3-oxobutanoyl-[ACP] + NADPH + H(+) = (3R)-hydroxybutanoyl-[ACP] + NADP(+). It carries out the reaction 3-oxopentanoyl-[ACP] + NADPH + H(+) = (3R)-hydroxypentanoyl-[ACP] + NADP(+). It catalyses the reaction 3-oxohexanoyl-[ACP] + NADPH + H(+) = (3R)-hydroxyhexanoyl-[ACP] + NADP(+). The catalysed reaction is 3-oxoheptanoyl-[ACP] + NADPH + H(+) = (3R)-hydroxyheptanoyl-[ACP] + NADP(+). The enzyme catalyses 3-oxooctanoyl-[ACP] + NADPH + H(+) = (3R)-hydroxyoctanoyl-[ACP] + NADP(+). It carries out the reaction 3-oxononanoyl-[ACP] + NADPH + H(+) = (3R)-hydroxynonanoyl-[ACP] + NADP(+). It catalyses the reaction 3-oxodecanoyl-[ACP] + NADPH + H(+) = (3R)-hydroxydecanoyl-[ACP] + NADP(+). The catalysed reaction is 3-oxohexadecanoyl-[ACP] + NADPH + H(+) = (3R)-hydroxyhexadecanoyl-[ACP] + NADP(+). The enzyme catalyses 3-oxo-(9Z)-hexadecenoyl-[ACP] + NADPH + H(+) = (3R)-hydroxy-(9Z)-hexadecenoyl-[ACP] + NADP(+). It carries out the reaction 4-methyl-3-oxopentanoyl-[ACP] + NADPH + H(+) = (3R)-hydroxy-4-methylpentanoyl-[ACP] + NADP(+). It catalyses the reaction 5-methyl-3-oxohexanoyl-[ACP] + NADPH + H(+) = (3R)-hydroxy-5-methylhexanoyl-[ACP] + NADP(+). The catalysed reaction is 4-methyl-3-oxohexanoyl-[ACP] + NADPH + H(+) = (3R)-hydroxy-4-methylhexanoyl-[ACP] + NADP(+). It participates in lipid metabolism; fatty acid biosynthesis. With respect to regulation, inhibited by cinnamic acid derivatives. In terms of biological role, catalyzes the NADPH-dependent reduction of beta-ketoacyl-ACP substrates to beta-hydroxyacyl-ACP products, the first reductive step in the elongation cycle of fatty acid biosynthesis. This Escherichia coli (strain K12) protein is 3-oxoacyl-[acyl-carrier-protein] reductase FabG (fabG).